A 332-amino-acid polypeptide reads, in one-letter code: Ribosomal RNA small subunit methyltransferase C (332 aa).

The protein belongs to the methyltransferase superfamily. RsmC family. Monomer.

The protein localises to the cytoplasm. The catalysed reaction is guanosine(1207) in 16S rRNA + S-adenosyl-L-methionine = N(2)-methylguanosine(1207) in 16S rRNA + S-adenosyl-L-homocysteine + H(+). Functionally, specifically methylates the guanine in position 1207 of 16S rRNA in the 30S particle. The protein is Ribosomal RNA small subunit methyltransferase C of Pseudomonas putida (strain ATCC 700007 / DSM 6899 / JCM 31910 / BCRC 17059 / LMG 24140 / F1).